Consider the following 383-residue polypeptide: MSMIAHVINPGISGVKLACAVIEPGQNPAFPSHLQVSLTREELPLEAAPDELGLDALAERILEQTAAWPAPDAVVGRGGLMGRVPAGTYHVTPELARYVLENVSGSQPADDPNPGIGAPLALRVAQARGVPAYIVDPQSVDELLPEAHMTGVPGVRREARFHALNARAVARRAAYEVGKQFREARVVVAHLGVTTSVTAFDQGRAIDTTGTAPDGGPMGARQSGPLPTRAVIRLLQTQSESELLRLLTRGSGFFALTGTADLSEIERRQEQGEDSVVQTAIAAFVHQVCKAIGEQTAALPGRPDAVALTGGIARWDAVVDRIERRLAWVAPFIVLPGELELEALAEGAGRVLLGLEGVREWTPEGVTLRPAAPLVQVETVEEV.

Belongs to the acetokinase family.

The protein localises to the cytoplasm. It catalyses the reaction butanoate + ATP = butanoyl phosphate + ADP. This chain is Probable butyrate kinase, found in Deinococcus radiodurans (strain ATCC 13939 / DSM 20539 / JCM 16871 / CCUG 27074 / LMG 4051 / NBRC 15346 / NCIMB 9279 / VKM B-1422 / R1).